A 191-amino-acid chain; its full sequence is Cell division protein SepF (191 aa).

Residues 156–167 (EEASPSNMSNKG) show a composition bias toward polar residues. The tract at residues 156–191 (EEASPSNMSNKGNDLISKETSPAPEPAWGETVATAL) is disordered.

The protein belongs to the SepF family. In terms of assembly, homodimer. Interacts with FtsZ.

It is found in the cytoplasm. Its function is as follows. Cell division protein that is part of the divisome complex and is recruited early to the Z-ring. Probably stimulates Z-ring formation, perhaps through the cross-linking of FtsZ protofilaments. Its function overlaps with FtsA. This Prochlorococcus marinus (strain NATL2A) protein is Cell division protein SepF.